We begin with the raw amino-acid sequence, 906 residues long: Ectonucleotide pyrophosphatase/phosphodiesterase family member 1 (906 aa).

The segment at 1–22 is disordered; sequence MERDGDQAGHGPRHGSAGNGRE. Over 1 to 58 the chain is Cytoplasmic; that stretch reads MERDGDQAGHGPRHGSAGNGRELESPAAASLLAPMDLGEEPLEKAERARPAKDPNTYK. Ser25 bears the Phosphoserine mark. Positions 27–34 match the Di-leucine motif motif; that stretch reads AAASLLAP. Residues 59–79 form a helical; Signal-anchor for type II membrane protein membrane-spanning segment; the sequence is VLSLVLSVCVLTTILGCIFGL. Over 80–906 the chain is Extracellular; it reads KPSCAKEVKS…THLPIFSQED (827 aa). 2 consecutive SMB domains span residues 86 to 126 and 127 to 171; these read EVKS…VEPT and HIWT…DKKS. 10 cysteine pairs are disulfide-bonded: Cys90–Cys104, Cys94–Cys122, Cys102–Cys115, Cys108–Cys114, Cys131–Cys148, Cys136–Cys166, Cys146–Cys159, Cys152–Cys158, Cys177–Cys223, and Cys185–Cys397. The N-linked (GlcNAc...) asparagine glycan is linked to Asn161. Residues 173–573 form a phosphodiesterase region; sequence VEETCESIDT…APNNGSHGSL (401 aa). AMP-binding residues include Asp200, Thr238, and Asn259. Positions 200 and 238 each coordinate Zn(2+). Residue Thr238 is the AMP-threonine intermediate of the active site. Thr238 and Asn259 together coordinate CMP. Residues Thr238 and Asn259 each coordinate dTMP. GMP is bound by residues Thr238 and Asn259. Thr238 bears the Phosphothreonine mark. A glycan (N-linked (GlcNAc...) asparagine) is linked at Asn267. GMP is bound by residues Leu272, Lys277, and Tyr322. AMP is bound by residues Lys277 and Tyr322. Residues Lys277 and Tyr322 each contribute to the CMP site. Tyr322 provides a ligand contact to dTMP. Asn323 is a glycosylation site (N-linked (GlcNAc...) asparagine). Asp358 is an AMP binding site. The Zn(2+) site is built by Asp358, His362, Asp405, and His406. Residue Asp358 participates in CMP binding. DTMP is bound at residue Asp358. GMP is bound at residue Asp358. Position 362 (His362) interacts with 2',3'-cGAMP. His406 contributes to the AMP binding site. Residue His406 participates in CMP binding. His406 lines the dTMP pocket. Residue His406 coordinates GMP. 6 cysteine pairs are disulfide-bonded: Cys413/Cys512, Cys462/Cys849, Cys596/Cys653, Cys607/Cys707, Cys609/Cys692, and Cys819/Cys829. Asn459 carries N-linked (GlcNAc...) asparagine glycosylation. 2',3'-cGAMP is bound at residue Ser514. Position 517 (His517) interacts with AMP. Residue His517 participates in Zn(2+) binding. His517 lines the CMP pocket. His517 lines the dTMP pocket. Residue His517 participates in GMP binding. 2 N-linked (GlcNAc...) asparagine glycosylation sites follow: Asn567 and Asn624. A linker region spans residues 579-628; sequence KPIYNPSHPKEEGFLSQCPIKSTSNDLGCTCDPWIVPIKDFEKQLNLTTE. The tract at residues 635–906 is nuclease-like domain; sequence HMTVPYGRPR…THLPIFSQED (272 aa). Ca(2+) is bound by residues Asp781, Asp783, Asp785, Arg787, and Asp789.

It belongs to the nucleotide pyrophosphatase/phosphodiesterase family. In terms of assembly, ectonucleotide pyrophosphatase/phosphodiesterase family member 1: Homodimer. Ectonucleotide pyrophosphatase/phosphodiesterase family member 1: Interacts with INSR; leading to inhibit INSR autophosphorylation and subsequent activation of INSR kinase activity. Ectonucleotide pyrophosphatase/phosphodiesterase family member 1, secreted form: Monomeric. Requires Zn(2+) as cofactor. N-glycosylated. Post-translationally, the secreted form is produced through cleavage at Lys-85 by intracellular processing. In terms of tissue distribution, selectively expressed on the surface of antibody-secreting cells. Expressed in osteocytes and osteoclasts.

The protein localises to the cell membrane. It is found in the basolateral cell membrane. Its subcellular location is the secreted. It carries out the reaction Hydrolytically removes 5'-nucleotides successively from the 3'-hydroxy termini of 3'-hydroxy-terminated oligonucleotides.. It catalyses the reaction a ribonucleoside 5'-triphosphate + H2O = a ribonucleoside 5'-phosphate + diphosphate + H(+). The catalysed reaction is ATP + H2O = AMP + diphosphate + H(+). The enzyme catalyses UTP + H2O = UMP + diphosphate + H(+). It carries out the reaction GTP + H2O = GMP + diphosphate + H(+). It catalyses the reaction CTP + H2O = CMP + diphosphate + H(+). The catalysed reaction is 2',3'-cGAMP + 2 H2O = GMP + AMP + 2 H(+). The enzyme catalyses P(1),P(4)-bis(5'-adenosyl) tetraphosphate + H2O = AMP + ATP + 2 H(+). It carries out the reaction 3',5'-cyclic AMP + H2O = AMP + H(+). At low concentrations of ATP, a phosphorylated intermediate is formed which inhibits further hydrolysis. Nucleotide pyrophosphatase that generates diphosphate (PPi) and functions in bone mineralization and soft tissue calcification by regulating pyrophosphate levels. PPi inhibits bone mineralization and soft tissue calcification by binding to nascent hydroxyapatite crystals, thereby preventing further growth of these crystals. Preferentially hydrolyzes ATP, but can also hydrolyze other nucleoside 5' triphosphates such as GTP, CTP and UTP to their corresponding monophosphates with release of pyrophosphate, as well as diadenosine polyphosphates, and also 3',5'-cAMP to AMP. May also be involved in the regulation of the availability of nucleotide sugars in the endoplasmic reticulum and Golgi, and the regulation of purinergic signaling. Inhibits ectopic joint calcification and maintains articular chondrocytes by repressing hedgehog signaling; it is however unclear whether hedgehog inhibition is direct or indirect. Appears to modulate insulin sensitivity. Also involved in melanogenesis. Also able to hydrolyze 2',3'-cGAMP (cyclic GMP-AMP), a second messenger that activates TMEM173/STING and triggers type-I interferon production. 2',3'-cGAMP degradation takes place in the lumen or extracellular space, and not in the cytosol where it is produced; the role of 2',3'-cGAMP hydrolysis is therefore unclear. Not able to hydrolyze the 2',3'-cGAMP linkage isomer 3',3'-cGAMP. This Mus musculus (Mouse) protein is Ectonucleotide pyrophosphatase/phosphodiesterase family member 1.